The chain runs to 88 residues: Small ribosomal subunit protein uS15 (88 aa).

The protein belongs to the universal ribosomal protein uS15 family. In terms of assembly, part of the 30S ribosomal subunit. Forms a bridge to the 50S subunit in the 70S ribosome, contacting the 23S rRNA.

Functionally, one of the primary rRNA binding proteins, it binds directly to 16S rRNA where it helps nucleate assembly of the platform of the 30S subunit by binding and bridging several RNA helices of the 16S rRNA. Forms an intersubunit bridge (bridge B4) with the 23S rRNA of the 50S subunit in the ribosome. This Flavobacterium johnsoniae (strain ATCC 17061 / DSM 2064 / JCM 8514 / BCRC 14874 / CCUG 350202 / NBRC 14942 / NCIMB 11054 / UW101) (Cytophaga johnsonae) protein is Small ribosomal subunit protein uS15.